The sequence spans 1345 residues: MKKPYSIGLDIGTNSVGWAVVTDDYKVPAKKMKVLGNTDKSHIEKNLLGALLFDSGNTAEDRRLKRTARRRYTRRRNRILYLQEIFSEEMGKVDDSFFHRLEDSFLVTEDKRGERHPIFGNLEEEVKYHENFPTIYHLRQYLADNPEKVDLRLVYLALAHIIKFRGHFLIEGKFDTRNNDVQRLFQEFLAVYDNTFENSSLQEQNVQVEEILTDKISKSAKKDRVLKLFPNEKSNGRFAEFLKLIVGNQADFKKHFELEEKAPLQFSKDTYEEELEVLLAQIGDNYAELFLSAKKLYDSILLSGILTVTDVGTKAPLSASMIQRYNEHQMDLAQLKQFIRQKLSDKYNEVFSDVSKDGYAGYIDGKTNQEAFYKYLKGLLNKIEGSGYFLDKIEREDFLRKQRTFDNGSIPHQIHLQEMRAIIRRQAEFYPFLADNQDRIEKLLTFRIPYYVGPLARGKSDFAWLSRKSADKITPWNFDEIVDKESSAEAFINRMTNYDLYLPNQKVLPKHSLLYEKFTVYNELTKVKYKTEQGKTAFFDANMKQEIFDGVFKVYRKVTKDKLMDFLEKEFDEFRIVDLTGLDKENKVFNASYGTYHDLCKILDKDFLDNSKNEKILEDIVLTLTLFEDREMIRKRLENYSDLLTKEQVKKLERRHYTGWGRLSAELIHGIRNKESRKTILDYLIDDGNSNRNFMQLINDDALSFKEEIAKAQVIGETDNLNQVVSDIAGSPAIKKGILQSLKIVDELVKIMGHQPENIVVEMARENQFTNQGRRNSQQRLKGLTDSIKEFGSQILKEHPVENSQLQNDRLFLYYLQNGRDMYTGEELDIDYLSQYDIDHIIPQAFIKDNSIDNRVLTSSKENRGKSDDVPSKDVVRKMKSYWSKLLSAKLITQRKFDNLTKAERGGLTDDDKAGFIKRQLVETRQITKHVARILDERFNTETDENNKKIRQVKIVTLKSNLVSNFRKEFELYKVREINDYHHAHDAYLNAVIGKALLGVYPQLEPEFVYGDYPHFHGHKENKATAKKFFYSNIMNFFKKDDVRTDKNGEIIWKKDEHISNIKKVLSYPQVNIVKKVEEQTGGFSKESILPKGNSDKLIPRKTKKFYWDTKKYGGFDSPIVAYSILVIADIEKGKSKKLKTVKALVGVTIMEKMTFERDPVAFLERKGYRNVQEENIIKLPKYSLFKLENGRKRLLASARELQKGNEIVLPNHLGTLLYHAKNIHKVDEPKHLDYVDKHKDEFKELLDVVSNFSKKYTLAEGNLEKIKELYAQNNGEDLKELASSFINLLTFTAIGAPATFKFFDKNIDRKRYTSTTEILNATLIHQSITGLYETRIDLNKLGGD.

The active-site For RuvC-like nuclease domain is the D10. 3 residues coordinate Mg(2+): D10, E762, and E766. The HNH Cas9-type domain occupies 770–921 (TNQGRRNSQQ…DKAGFIKRQL (152 aa)). H840 functions as the Proton acceptor for HNH nuclease domain in the catalytic mechanism. H983 contributes to the Mg(2+) binding site.

It belongs to the CRISPR-associated protein Cas9 family. Subtype II-A subfamily. In terms of assembly, monomer. Binds crRNA and tracrRNA. The cofactor is Mg(2+).

Functionally, CRISPR (clustered regularly interspaced short palindromic repeat) is an adaptive immune system that provides protection against mobile genetic elements (viruses, transposable elements and conjugative plasmids). CRISPR clusters contain spacers, sequences complementary to antecedent mobile elements, and target invading nucleic acids. CRISPR clusters are transcribed and processed into CRISPR RNA (crRNA). In type II CRISPR systems correct processing of pre-crRNA requires a trans-encoded small RNA (tracrRNA), endogenous ribonuclease 3 (rnc) and this protein. The tracrRNA serves as a guide for ribonuclease 3-aided processing of pre-crRNA. Subsequently Cas9/crRNA/tracrRNA endonucleolytically cleaves linear or circular dsDNA target complementary to the spacer; Cas9 is inactive in the absence of the 2 guide RNAs (gRNA). Cas9 recognizes the protospacer adjacent motif (PAM) in the CRISPR repeat sequences to help distinguish self versus nonself, as targets within the bacterial CRISPR locus do not have PAMs. PAM recognition is also required for catalytic activity. Complements the gRNA coprocessing defect in a cas9 deletion in S.pyogenes strain 370 and cuts target plasmid in Cas9:gRNAs mixing experiments with S.thermophilus CRISPR3 from strain LMD-9. The protein is CRISPR-associated endonuclease Cas9 of Streptococcus mutans serotype c (strain ATCC 700610 / UA159).